Reading from the N-terminus, the 734-residue chain is Photosystem I P700 chlorophyll a apoprotein A2 (734 aa).

8 consecutive transmembrane segments (helical) span residues 46–69 (IFASHFGQLAIIFLWTSGNLFHVA), 135–158 (LYTGALFLLFLSAISLIAGWLHLQ), 175–199 (LNHHLSGLFGVSSLAWTGHLVHVAI), 273–291 (MAHHHLAIAFIFLVAGHMY), 330–353 (IHFQLGLALASLGVITSLVAQHMY), 369–395 (AALYTHHQYIAGFIMTGAFAHGAIFFI), 417–439 (AIKSHLSWASLFLGFHTLGLYVH), and 517–535 (FLVHHAIALGLHTTTLILV). Residues Cys-559 and Cys-568 each coordinate [4Fe-4S] cluster. Transmembrane regions (helical) follow at residues 575–596 (AFYLAVFWMLNTIGWVTFYWHW) and 643–665 (LSVWAWMFLFGHLVWATGFMFLI). His-654, Met-662, and Tyr-670 together coordinate chlorophyll a. Trp-671 contacts phylloquinone. The helical transmembrane segment at 707-727 (LVGLAHFSVGYIFTYAAFLIA) threads the bilayer.

It belongs to the PsaA/PsaB family. In terms of assembly, the PsaA/B heterodimer binds the P700 chlorophyll special pair and subsequent electron acceptors. PSI consists of a core antenna complex that captures photons, and an electron transfer chain that converts photonic excitation into a charge separation. The eukaryotic PSI reaction center is composed of at least 11 subunits. It depends on P700 is a chlorophyll a/chlorophyll a' dimer, A0 is one or more chlorophyll a, A1 is one or both phylloquinones and FX is a shared 4Fe-4S iron-sulfur center. as a cofactor.

The protein resides in the plastid. It localises to the chloroplast thylakoid membrane. It catalyses the reaction reduced [plastocyanin] + hnu + oxidized [2Fe-2S]-[ferredoxin] = oxidized [plastocyanin] + reduced [2Fe-2S]-[ferredoxin]. Its function is as follows. PsaA and PsaB bind P700, the primary electron donor of photosystem I (PSI), as well as the electron acceptors A0, A1 and FX. PSI is a plastocyanin-ferredoxin oxidoreductase, converting photonic excitation into a charge separation, which transfers an electron from the donor P700 chlorophyll pair to the spectroscopically characterized acceptors A0, A1, FX, FA and FB in turn. Oxidized P700 is reduced on the lumenal side of the thylakoid membrane by plastocyanin. The protein is Photosystem I P700 chlorophyll a apoprotein A2 of Chloranthus spicatus (Chulantree).